The following is a 348-amino-acid chain: Rhodopsin (348 aa).

Residue Met1 is modified to N-acetylmethionine. Residues Met1–Met36 lie on the Extracellular side of the membrane. Residues Asn2 and Asn15 are each glycosylated (N-linked (GlcNAc...) asparagine). Residues Phe37–Val61 traverse the membrane as a helical segment. The Cytoplasmic portion of the chain corresponds to Thr62–Asn73. The helical transmembrane segment at Tyr74–Val96 threads the bilayer. The Extracellular portion of the chain corresponds to Thr97–Cys110. Cys110 and Cys187 are joined by a disulfide. The chain crosses the membrane as a helical span at residues Leu111–Ile133. The short motif at Glu134–Tyr136 is the 'Ionic lock' involved in activated form stabilization element. Over Glu134–His152 the chain is Cytoplasmic. Residues Ala153–Phe173 form a helical membrane-spanning segment. Topologically, residues Gly174–Ser202 are extracellular. Glu201 provides a ligand contact to Zn(2+). A helical transmembrane segment spans residues Phe203 to Gly224. Residues Gln225 to Arg252 lie on the Cytoplasmic side of the membrane. Residues Met253–Tyr274 form a helical membrane-spanning segment. The Extracellular portion of the chain corresponds to Ile275–Ile286. Gln279 is a binding site for Zn(2+). A helical membrane pass occupies residues Phe287–Met308. Lys296 carries the post-translational modification N6-(retinylidene)lysine. Residues Met309 to Ala348 are Cytoplasmic-facing. Residues Cys322 and Cys323 are each lipidated (S-palmitoyl cysteine). The interval Asp330–Ala348 is interaction with SAG. Residue Ser334 is modified to Phosphoserine. Phosphothreonine is present on residues Thr335 and Thr336. Ser338 is modified (phosphoserine). Thr340 and Thr342 each carry phosphothreonine. Ser343 carries the post-translational modification Phosphoserine.

Belongs to the G-protein coupled receptor 1 family. Opsin subfamily. Homodimer. May form a complex composed of RHO, GRK1 and RCVRN in a Ca(2+)-dependent manner; RCVRN prevents the interaction between GRK1 and RHO. Interacts with GRK1. Interacts (phosphorylated form) with SAG. Interacts with GNAT1. Interacts with GNAT3. SAG and G-proteins compete for a common binding site. Interacts with PRCD; the interaction promotes PRCD stability. Forms a complex with ASAP1 and ARF4. Forms a complex with ASAP1, RAB11A, Rabin8/RAB3IP, ARF4 and RAB11FIP3; the complex regulates Golgi-to-cilia rhodopsin/RHO transport in photoreceptors. Phosphorylated on some or all of the serine and threonine residues present in the C-terminal region. In terms of processing, contains one covalently linked retinal chromophore. Upon light absorption, the covalently bound 11-cis-retinal is converted to all-trans-retinal. After hydrolysis of the Schiff base and release of the covalently bound all-trans-retinal, active rhodopsin is regenerated by binding of a fresh molecule of 11-cis-retinal.

The protein resides in the membrane. It localises to the cell projection. It is found in the cilium. The protein localises to the photoreceptor outer segment. Its function is as follows. Photoreceptor required for image-forming vision at low light intensity. Required for photoreceptor cell viability after birth. Light-induced isomerization of 11-cis to all-trans retinal triggers a conformational change that activates signaling via G-proteins. Subsequent receptor phosphorylation mediates displacement of the bound G-protein alpha subunit by the arrestin SAG and terminates signaling. The chain is Rhodopsin (RHO) from Sminthopsis crassicaudata (Fat-tailed dunnart).